Here is a 285-residue protein sequence, read N- to C-terminus: Protease HtpX homolog (285 aa).

The next 2 membrane-spanning stretches (helical) occupy residues 7–27 and 30–50; these read TAMLMAAITALFIVIGGMIGG and GMTIALLFALGMNFFSYWFSD. Residue histidine 131 participates in Zn(2+) binding. The active site involves glutamate 132. Position 135 (histidine 135) interacts with Zn(2+). The next 2 membrane-spanning stretches (helical) occupy residues 146 to 166 and 177 to 197; these read ITATMAGAISAIANFAMFFGG and IAGIAVALLAPIAGALIQMAI. Glutamate 202 is a Zn(2+) binding site.

This sequence belongs to the peptidase M48B family. Zn(2+) is required as a cofactor.

The protein resides in the cell inner membrane. The chain is Protease HtpX homolog from Burkholderia multivorans (strain ATCC 17616 / 249).